Here is a 389-residue protein sequence, read N- to C-terminus: Globin-like protein 6 (389 aa).

A compositionally biased stretch (polar residues) spans 1–15 (MGNQSTKSTHGTTRV). 3 disordered regions span residues 1-38 (MGNQSTKSTHGTTRVSHSKSAHHNSSRVTSDVIPRSAS), 96-123 (RTSKQSPLATGCPRQNLGSPGNRRSVDS), and 143-185 (TVSS…SSNP). The span at 16–25 (SHSKSAHHNS) shows a compositional bias: basic residues. A Globin domain is found at 196-347 (HLTQPQILFV…VTEQLKEGFQ (152 aa)). His254 and His286 together coordinate heme b. The segment at 367 to 389 (SSFEISTKTKQSDMKRFHTLDNM) is disordered. Basic and acidic residues predominate over residues 376–389 (KQSDMKRFHTLDNM).

The protein belongs to the globin family. In terms of tissue distribution, expressed in the head and tail neurons and nerve cord.

Functionally, may play a role as physiological sensor for oxygen via redox signaling and/or electron transport. This Caenorhabditis elegans protein is Globin-like protein 6.